We begin with the raw amino-acid sequence, 125 residues long: Plastocyanin (125 aa).

Residues 1 to 34 (MKVLASFARRLSLFAVAAVLCVGSFFLSAAPASA) form the signal peptide. Positions 35 to 125 (QTVAIKMGAD…AGMVGKIVVQ (91 aa)) constitute a Plastocyanin-like domain. Positions 73, 110, 113, and 118 each coordinate Cu cation.

It belongs to the plastocyanin family. Cu(2+) serves as cofactor.

Its subcellular location is the cellular thylakoid membrane. In terms of biological role, participates in electron transfer between P700 and the cytochrome b6-f complex in photosystem I. The protein is Plastocyanin (petE) of Synechococcus elongatus (strain ATCC 33912 / PCC 7942 / FACHB-805) (Anacystis nidulans R2).